The chain runs to 582 residues: DNA primase (582 aa).

The CHC2-type zinc finger occupies 40-64 (CPFHHEKTPSFTVSQKKQFYHCFGC). Positions 259-341 (EMLLVVEGYM…GRQLKFVFLP (83 aa)) constitute a Toprim domain. Mg(2+) contacts are provided by glutamate 265, aspartate 309, and aspartate 311.

This sequence belongs to the DnaG primase family. As to quaternary structure, monomer. Interacts with DnaB. Zn(2+) serves as cofactor. The cofactor is Mg(2+).

The enzyme catalyses ssDNA + n NTP = ssDNA/pppN(pN)n-1 hybrid + (n-1) diphosphate.. Its function is as follows. RNA polymerase that catalyzes the synthesis of short RNA molecules used as primers for DNA polymerase during DNA replication. In Pasteurella multocida (strain Pm70), this protein is DNA primase.